Reading from the N-terminus, the 1303-residue chain is Alpha,alpha-trehalose-phosphate synthase [UDP-forming] 2 (1303 aa).

Disordered regions lie at residues 1-48 (MTVV…NNTT) and 205-251 (LQRR…FRGK). Low complexity predominate over residues 212–221 (SSRGGSLRGS).

It in the N-terminal section; belongs to the glycosyltransferase 20 family. The protein in the C-terminal section; belongs to the gob-1 trehalose phosphatase family.

It carries out the reaction D-glucose 6-phosphate + UDP-alpha-D-glucose = alpha,alpha-trehalose 6-phosphate + UDP + H(+). In terms of biological role, catalyzes the production of trehalose from glucose-6-phosphate and UDP-alpha-D-glucose in a 2 step process. This is Alpha,alpha-trehalose-phosphate synthase [UDP-forming] 2 (tps-2) from Aphelenchoides avenae (Mycophagous nematode worm).